Reading from the N-terminus, the 383-residue chain is Chitinase-3-like protein 1 (383 aa).

The N-terminal stretch at 1–21 is a signal peptide; the sequence is MGLRASGTGFVVLVLLQSCAA. The GH18 domain maps to 22–383; it reads YKLICYYTSW…SAVKDVLAEV (362 aa). Cys-26 and Cys-51 are disulfide-bonded. Asn-60 carries N-linked (GlcNAc...) asparagine glycosylation. Chitin is bound by residues 70–71, 97–100, Tyr-141, 204–207, and Arg-263; these read EW, GGWN, and LTYD. An intrachain disulfide couples Cys-300 to Cys-364. The tract at residues 324–338 is important for AKT1 activation and IL8 production; it reads QWVAYDDQESVKNKA. Position 352 (Trp-352) interacts with chitin. Asn-367 carries N-linked (GlcNAc...) asparagine glycosylation.

This sequence belongs to the glycosyl hydrolase 18 family. As to quaternary structure, monomer.

The protein resides in the secreted. Its subcellular location is the extracellular space. The protein localises to the cytoplasm. It is found in the perinuclear region. It localises to the endoplasmic reticulum. In terms of biological role, carbohydrate-binding lectin with a preference for chitin. Has no chitinase activity. May play a role in tissue remodeling and in the capacity of cells to respond to and cope with changes in their environment. Plays a role in T-helper cell type 2 (Th2) inflammatory response and IL-13-induced inflammation, regulating allergen sensitization, inflammatory cell apoptosis, dendritic cell accumulation and M2 macrophage differentiation. Facilitates invasion of pathogenic enteric bacteria into colonic mucosa and lymphoid organs. Mediates activation of AKT1 signaling pathway and subsequent IL8 production in colonic epithelial cells. Regulates antibacterial responses in lung by contributing to macrophage bacterial killing, controlling bacterial dissemination and augmenting host tolerance. Also regulates hyperoxia-induced injury, inflammation and epithelial apoptosis in lung. The chain is Chitinase-3-like protein 1 (CHI3L1) from Capra hircus (Goat).